The following is a 114-amino-acid chain: Transcription factor S1 (114 aa).

Residues 1-43 (MIVVKFCPKCNSMMVPKKSNGKNVYRCTKCGYEKEVPETTIVV) are N-ZR. Zn(2+) contacts are provided by cysteine 7, cysteine 10, cysteine 27, cysteine 30, cysteine 75, and cysteine 78. The tract at residues 63 to 114 (MPSGAQKIKGVLCPSCKNDEAYFWILQTRRADEPPTRFYKCTKCGKVWREYE) is C-ZR. The TFIIS-type zinc finger occupies 71–111 (KGVLCPSCKNDEAYFWILQTRRADEPPTRFYKCTKCGKVWR). Catalysis depends on residues aspartate 94 and glutamate 95. Zn(2+)-binding residues include cysteine 103 and cysteine 106.

The protein belongs to the archaeal RpoM/eukaryotic RPA12/RPB9/RPC11 RNA polymerase family. As to quaternary structure, interacts with RNA polymerase; probably competes with TFS4 for the same binding site. The cofactor is Zn(2+).

Its function is as follows. Induces RNA cleavage activity in the RNA polymerase. Induces rapid cleavage of a stalled transcription elongation complex with a 2-nucleotide reduction at the 3' end of the nascent RNA. Truncated RNA is able to resume elongation. During transcription elongation it enhances processivity. Involved in transcriptional proofreading and fidelity. Misincorporation of nucleotides during elongation of transcription leads to arrested elongation complexes which are rescued by TFS-promoted removal of a dinucleotide from the 3'-end. TFS1 is able to induce a cleavage resynthesis cycle in stalled elongation complexes (resulting from the next missing nucleotide or a reduced incorporation rate of a wrong nucleotide) preventing misincorporation and enabling proofreading in a post-incorporation manner. Pausing of elongation complexes is the main determinant of TFS-induced RNA cleavage. The polypeptide is Transcription factor S1 (Saccharolobus solfataricus (strain ATCC 35092 / DSM 1617 / JCM 11322 / P2) (Sulfolobus solfataricus)).